The chain runs to 344 residues: tRNA N6-adenosine threonylcarbamoyltransferase (344 aa).

Residues H111 and H115 each coordinate Fe cation. Substrate contacts are provided by residues 134–138 (LVSGG), D167, G180, and N273. D301 serves as a coordination point for Fe cation.

It belongs to the KAE1 / TsaD family. Fe(2+) is required as a cofactor.

The protein localises to the cytoplasm. The enzyme catalyses L-threonylcarbamoyladenylate + adenosine(37) in tRNA = N(6)-L-threonylcarbamoyladenosine(37) in tRNA + AMP + H(+). Required for the formation of a threonylcarbamoyl group on adenosine at position 37 (t(6)A37) in tRNAs that read codons beginning with adenine. Is involved in the transfer of the threonylcarbamoyl moiety of threonylcarbamoyl-AMP (TC-AMP) to the N6 group of A37, together with TsaE and TsaB. TsaD likely plays a direct catalytic role in this reaction. This chain is tRNA N6-adenosine threonylcarbamoyltransferase, found in Cupriavidus pinatubonensis (strain JMP 134 / LMG 1197) (Cupriavidus necator (strain JMP 134)).